We begin with the raw amino-acid sequence, 938 residues long: MTNPKSGVAESAGLACSRAAAGENRMKDSENKGASSPDMEPSYGGGLFDMVKGGAGRLFSNLKDNLKDTLKDTSSRVIQSVSSYTKGDLDFTYVTSRIIVMSFPVDSVDIGFRNQVDDIRSFLDSRHLDHYTVYNLSPKSYRTAKFHSRVSECSWPIRQAPSLHNLFAVCRNMYNWLLQNPKNVCVVHCLDGRAASSILVGAMFIFCNLYSTPGPAVRLLYAKRPGIGLSPSHRRYLGYMCDLLADKPYRPHFKPLTIKAITVSPVPFFNKQRNGCRPYCDVLIGETKIYSTCTDFERMKEYRVQDGKIFIPLNITVQGDVIVSMYHLRSTIGSRLQAKVTNTQIFQLQFHSGFIPLDTTVLKFTKPELDACDVPEKYPQLFQVTLDIEVQPQDKVIDLTPPWEHYCTKDVNPSILFSSQQEHQDTLALGGQAPADLPPDHPRNLGQGGFFASLCWQDQKSEKSRCEEDHAALVNQESEQSDDELLTLSSPHGNAEGDKPHGAKKPGKKQQEPAAPPPPEEVDLLGLEGSDVSTNFSSLAAPPSNSELLSDLFGGVGATGPAQAGQAGVEDVFHPSGPVSAQSTPRRTATSASASPTLRVGEGATFDPFGAPAKPPGQDLLGSFLNTSSASSDPFLQPTRSPSPTVHASSTPAVNIQPDIAGGWDWHTKPGGFGMGSKSAATSPTGSSHGTPTHQSKPQTLDPFADLGTLGSSSFASKPTTPTGLGGGFPPLSSPQKASPQPMGGGWQQPAGYNWQQTQSKPQSSMPHSSPQNRPNYNVSFSAMPAGQSERGKGSTNLEGKQKAADFEDLLSSQGFNAHKDKKGPRTIAEMRKEEMAKEMDPEKLKILEWIEGKERNIRALLSTMHTVLWAGETKWKPVGMADLVTPEQVKKVYRRAVLVVHPDKATGQPYEQYAKMIFMELNDAWSEFENQGQKPLY.

Residues alanine 19 to proline 41 form a disordered region. 3 consecutive repeat copies span residues asparagine 61–aspartate 64, asparagine 65–aspartate 68, and threonine 69–aspartate 72. Residues asparagine 61–aspartate 72 are 3 X 4 AA approximate tandem repeats. Positions serine 80–lysine 247 constitute a Phosphatase tensin-type domain. The residue at position 137 (serine 137) is a Phosphoserine. The active-site Phosphocysteine intermediate is the cysteine 189. The region spanning phenylalanine 253–glutamine 391 is the C2 tensin-type domain. Positions proline 434–proline 442 match the SH3-binding motif. The segment at glutamate 467 to lysine 801 is disordered. Residues serine 478 and serine 481 each carry the phosphoserine modification. The span at aspartate 531–leucine 548 shows a compositional bias: polar residues. Residues threonine 559–valine 569 show a composition bias toward low complexity. Composition is skewed to polar residues over residues valine 579 to proline 596 and phenylalanine 624 to valine 654. Serine 595 bears the Phosphoserine mark. Positions serine 679 to histidine 694 are enriched in low complexity. Positions asparagine 754 to phenylalanine 781 are enriched in polar residues. The 65-residue stretch at threonine 874–tyrosine 938 folds into the J domain.

In terms of assembly, forms a complex composed of HSPA8, CLTC and DNAJC6. Interacts with HSPA8/HSC70 in an ATP-dependent manner; this interaction stimulates the HSPA8's ATPase activity. Interacts with CLTC; this interaction produces a local change in heavy-chain contacts, creating a detectable global distortion of the clathrin coat. Interacts with AP2A2. Interacts with DNM1(GTP-bound form); this interaction allows clathrin-coated vesicle (CCV) formation at the plasma membrane. Post-translationally, the N-terminus is blocked. Phosphorylation at Ser-595 modulates its ability to bind CLTC and therefore the synaptic vesicle endocytosis (SVE).

The protein localises to the cytoplasmic vesicle. The protein resides in the clathrin-coated vesicle. Functionally, may act as a protein phosphatase and/or a lipid phosphatase. Co-chaperone that recruits HSPA8/HSC70 to clathrin-coated vesicles (CCVs) and promotes the ATP-dependent dissociation of clathrin from CCVs and participates in clathrin-mediated endocytosis of synaptic vesicles and their recycling and also in intracellular trafficking. Firstly, binds tightly to the clathrin cages, at a ratio of one DNAJC6 per clathrin triskelion. The HSPA8:ATP complex then binds to the clathrin-auxilin cage, initially at a ratio of one HSPA8 per triskelion leading to ATP hydrolysis stimulation and causing a conformational change in the HSPA8. This cycle is repeated three times to drive to a complex containing the clathrin-auxilin cage associated to three HSPA8:ADP complex. The ATP hydrolysis of the third HSPA8:ATP complex leads to a concerted dismantling of the cage into component triskelia. Then, dissociates from the released triskelia and be recycled to initiate another cycle of HSPA8's recruitment. Also acts during the early steps of clathrin-coated vesicle (CCV) formation through its interaction with the GTP bound form of DNM1. In Mus musculus (Mouse), this protein is Auxilin.